Consider the following 516-residue polypeptide: Keratin, type II cuticular Hb2 (516 aa).

The interval methionine 1–glutamate 118 is head. The IF rod domain occupies glutamate 118 to leucine 429. The coil 1A stretch occupies residues lysine 119–methionine 153. Residues glutamine 154 to methionine 163 are linker 1. The interval glutamate 164–serine 264 is coil 1B. Positions glutamine 265–leucine 281 are linker 12. The coil 2 stretch occupies residues aspartate 282–glutamate 425. Residues glutamate 426–arginine 516 form a tail region.

Belongs to the intermediate filament family. Heterotetramer of two type I and two type II keratins.

The sequence is that of Keratin, type II cuticular Hb2 (Krt82) from Mus musculus (Mouse).